The primary structure comprises 473 residues: MKPFLNDDFLLTNETSKVLYHQYAKGMPIIDYHCHLSPKEIYENKTFKNLTEVWLYGDHYKWRAMRANGISEEFITGDASDEEKFSAWARTVPMTIGNPLYHWTHLELRRFFGIDDRLDEKSAPHIWERVNEQLAGGGFGARDLIEKSNVETVVTTDDPTDSLEYHVKLKDEDFNVSVLPGFRPDKAMEINQEGFAAWVRKLETASGMKIANYDDFLKALKNRIDFFHEAGGRISDHAINQMMYTETDESEVRPIFAKVMNGESASPEEECKFKSLTLHFLGTCYAEKGWAMQLHINALRNNSSKMYRKLGPDTGYDAINDQDIAKPLCSFLDSLDRKDALPKTILYSLNPRDNVVISSLCGSFQDGRIPGKIQHGTAWWFNDTKDGMLEQMKSLANIGLLSRFIGMLTDSRSFLSYTRHEYFRRLLCDVIGTWVENGEAPDDIELLGRIVKGICYENAKHYFQFEVKDRLKA.

The protein belongs to the metallo-dependent hydrolases superfamily. Uronate isomerase family.

The enzyme catalyses D-glucuronate = D-fructuronate. It carries out the reaction aldehydo-D-galacturonate = keto-D-tagaturonate. It participates in carbohydrate metabolism; pentose and glucuronate interconversion. In Bacillus licheniformis (strain ATCC 14580 / DSM 13 / JCM 2505 / CCUG 7422 / NBRC 12200 / NCIMB 9375 / NCTC 10341 / NRRL NRS-1264 / Gibson 46), this protein is Uronate isomerase.